The primary structure comprises 247 residues: Phosphoribosylaminoimidazole-succinocarboxamide synthase (247 aa).

Belongs to the SAICAR synthetase family.

The catalysed reaction is 5-amino-1-(5-phospho-D-ribosyl)imidazole-4-carboxylate + L-aspartate + ATP = (2S)-2-[5-amino-1-(5-phospho-beta-D-ribosyl)imidazole-4-carboxamido]succinate + ADP + phosphate + 2 H(+). It functions in the pathway purine metabolism; IMP biosynthesis via de novo pathway; 5-amino-1-(5-phospho-D-ribosyl)imidazole-4-carboxamide from 5-amino-1-(5-phospho-D-ribosyl)imidazole-4-carboxylate: step 1/2. This is Phosphoribosylaminoimidazole-succinocarboxamide synthase from Herpetosiphon aurantiacus (strain ATCC 23779 / DSM 785 / 114-95).